Consider the following 399-residue polypeptide: Probable sugar efflux transporter (399 aa).

Helical transmembrane passes span 15-35, 50-70, 81-101, 103-123, 136-156, 168-188, 209-229, 246-266, 273-293, 301-321, 333-353, and 364-384; these read VVTLAIAAFIFNTTEFAPVGL, VGMMLTIYAWVVALMSLPFML, LIGLFILFIASHVLSFFAWSF, VLVISRIGIAFAHAVFWSITS, AQALSLIATGTALAMVFGIPI, MTFLAIGLGALATLACLVKLL, PALVSVYILTVVVVTAHYTAY, FATVLLLILGGAGIIGSILFG, ASGLISIAIGLLLACLLLLLP, LMLLSIFWGVAIMIIGLGMQV, VAMSLFSGIFNIGIGAGALVG, and SIGYIGAIPALAALVWSLMIF.

This sequence belongs to the major facilitator superfamily. SotB (TC 2.A.1.2) family.

It localises to the cell inner membrane. Involved in the efflux of sugars. The physiological role may be the reduction of the intracellular concentration of toxic sugars or sugar metabolites. In Klebsiella pneumoniae (strain 342), this protein is Probable sugar efflux transporter.